A 298-amino-acid polypeptide reads, in one-letter code: Aspartate carbamoyltransferase catalytic subunit (298 aa).

Residues arginine 54 and threonine 55 each coordinate carbamoyl phosphate. Residue lysine 82 coordinates L-aspartate. Carbamoyl phosphate-binding residues include arginine 104, histidine 132, and glutamine 135. Residues arginine 165 and arginine 218 each contribute to the L-aspartate site. Carbamoyl phosphate is bound by residues glycine 260 and proline 261.

It belongs to the aspartate/ornithine carbamoyltransferase superfamily. ATCase family. Heterododecamer (2C3:3R2) of six catalytic PyrB chains organized as two trimers (C3), and six regulatory PyrI chains organized as three dimers (R2).

The enzyme catalyses carbamoyl phosphate + L-aspartate = N-carbamoyl-L-aspartate + phosphate + H(+). The protein operates within pyrimidine metabolism; UMP biosynthesis via de novo pathway; (S)-dihydroorotate from bicarbonate: step 2/3. Catalyzes the condensation of carbamoyl phosphate and aspartate to form carbamoyl aspartate and inorganic phosphate, the committed step in the de novo pyrimidine nucleotide biosynthesis pathway. This is Aspartate carbamoyltransferase catalytic subunit from Wolbachia sp. subsp. Brugia malayi (strain TRS).